Consider the following 151-residue polypeptide: Macrodomain Ter protein (151 aa).

The protein belongs to the MatP family. Homodimer.

It localises to the cytoplasm. Required for spatial organization of the terminus region of the chromosome (Ter macrodomain) during the cell cycle. Prevents early segregation of duplicated Ter macrodomains during cell division. Binds specifically to matS, which is a 13 bp signature motif repeated within the Ter macrodomain. The protein is Macrodomain Ter protein of Escherichia fergusonii (strain ATCC 35469 / DSM 13698 / CCUG 18766 / IAM 14443 / JCM 21226 / LMG 7866 / NBRC 102419 / NCTC 12128 / CDC 0568-73).